The sequence spans 507 residues: Maturase K (507 aa).

This sequence belongs to the intron maturase 2 family. MatK subfamily.

The protein resides in the plastid. It is found in the chloroplast. In terms of biological role, usually encoded in the trnK tRNA gene intron. Probably assists in splicing its own and other chloroplast group II introns. This chain is Maturase K, found in Kalmia buxifolia (Sand myrtle).